Here is a 371-residue protein sequence, read N- to C-terminus: Probable protein phosphatase 2C 11 (371 aa).

Residues 29–49 form a helical membrane-spanning segment; sequence FFFFLFNSQTISSFIIFYLFL. A disordered region spans residues 67–95; that stretch reads PPLSVAPLRGDANSPPPESSSSPATKSSL. A compositionally biased stretch (low complexity) spans 85–94; that stretch reads SSSSPATKSS. Residues 123-368 enclose the PPM-type phosphatase domain; that stretch reads SYGYSSLKGK…DNITCIVVRF (246 aa). Mn(2+) is bound by residues aspartate 159, glycine 160, aspartate 320, and aspartate 359.

The protein belongs to the PP2C family. The cofactor is Mg(2+). It depends on Mn(2+) as a cofactor.

The protein resides in the membrane. It catalyses the reaction O-phospho-L-seryl-[protein] + H2O = L-seryl-[protein] + phosphate. The enzyme catalyses O-phospho-L-threonyl-[protein] + H2O = L-threonyl-[protein] + phosphate. The chain is Probable protein phosphatase 2C 11 from Arabidopsis thaliana (Mouse-ear cress).